The following is a 1024-amino-acid chain: Non-canonical nonribosomal peptide synthetase FrzA (1024 aa).

An adenylation (A) domain region spans residues 29–425 (RAQKSHQAIA…GRRDHQVKVR (397 aa)). The region spanning 534–611 (NASQDVRSAL…ALTSIIKQRL (78 aa)) is the Carrier domain. Residue Ser571 is modified to O-(pantetheine 4'-phosphoryl)serine. The Thioester reductase (TE) domain maps to 655 to 898 (LTGGTGFVGA…VPVDYVNAAI (244 aa)).

This sequence belongs to the NRP synthetase family. It depends on pantetheine 4'-phosphate as a cofactor.

It catalyses the reaction L-tyrosinal + AMP + diphosphate + NADP(+) = L-tyrosine + ATP + NADPH + H(+). The protein operates within secondary metabolite biosynthesis. Non-canonical nonribosomal peptide synthetase; part of the gene cluster that mediates the biosynthesis of the alkaloid (-)-FR901483, a potent immunosuppressant that shows efficacy in animal models and a probable inhibitor of purine nucleotide biosynthesis by targeting phosphoribosylpyrophosphate amidotransferase (PPAT). Within the pathway, FrzA catalyzes the reduction of L-tyrosine via its C-terminal reductase domain to produce L-tyrosinal. The biosynthesis of (-)-FR901483 starts with the condensation of two L-tyrosines to yield (S,S)-dityrosyl-piperazine. This process occurs in 3 steps with the non-canonical nonribosomal peptide synthetase FrzA catalyzing the reduction of L-tyrosine into L-tyrosinal, the spontaneous condensation of 2 L-tyrosinal units, and the subsequent reduction by the NmrA-like family domain-containing oxidoreductase FrzB. The cytochrome P450 monooxygenase FrzC then performs coupling between N10 and C1' to morph the piperazine into a 1,4-diazabicyclo[3.2.1]octane spiro-fused to a 2,5-cyclohexadienone. The dienone portion is further reduced to cyclohexanone by the flavin-dependent reductase FrzD. The methyltranserases (MTs) FrzE and FrzF are then involved in the methylation at the C10' amine and the C4 phenolic oxygen, respectively. The order of the two MTs appear to be interchangeable. Cleavage of the C9-N10' bond by the dioxygenase FrzG then leads to formation of a conjugated iminium. In addition to the oxidation of C9, an additional dehydrogenation between C7 and C8 can occur to give a likely shunt product. The next biosynthetic step is the intramolecular aldol condensation catalyzed by the newly identified aldolase FrzH to yield an aza-tricyclic product with the formation of a C9-C3' bond. The short-chain dehydrogenase/reductase FrzI then produces dephospho-(-)-FR901483 that is phosphorylated at C4'-OH into (-)-FR901483 by the phosphotransferase FrzJ. This Cladobotryum sp protein is Non-canonical nonribosomal peptide synthetase FrzA.